The following is a 416-amino-acid chain: Lipoyl synthase, mitochondrial (416 aa).

Residues 1–33 (MAAPTRSLRRLSSFRTTISPSLTVTAPIGCRSY) constitute a mitochondrion transit peptide. The [4Fe-4S] cluster site is built by Cys132, Cys137, Cys143, Cys163, Cys167, Cys170, and Ser378. Positions 148–367 (DKSSATATIM…RQRALDMGFL (220 aa)) constitute a Radical SAM core domain. The interval 396-416 (GSGTAERTVDQTAATTDEATR) is disordered. Residues 405–416 (DQTAATTDEATR) are compositionally biased toward polar residues.

This sequence belongs to the radical SAM superfamily. Lipoyl synthase family. [4Fe-4S] cluster is required as a cofactor.

Its subcellular location is the mitochondrion. It catalyses the reaction [[Fe-S] cluster scaffold protein carrying a second [4Fe-4S](2+) cluster] + N(6)-octanoyl-L-lysyl-[protein] + 2 oxidized [2Fe-2S]-[ferredoxin] + 2 S-adenosyl-L-methionine + 4 H(+) = [[Fe-S] cluster scaffold protein] + N(6)-[(R)-dihydrolipoyl]-L-lysyl-[protein] + 4 Fe(3+) + 2 hydrogen sulfide + 2 5'-deoxyadenosine + 2 L-methionine + 2 reduced [2Fe-2S]-[ferredoxin]. It participates in protein modification; protein lipoylation via endogenous pathway; protein N(6)-(lipoyl)lysine from octanoyl-[acyl-carrier-protein]: step 2/2. Its function is as follows. Catalyzes the radical-mediated insertion of two sulfur atoms into the C-6 and C-8 positions of the octanoyl moiety bound to the lipoyl domains of lipoate-dependent enzymes, thereby converting the octanoylated domains into lipoylated derivatives. This is Lipoyl synthase, mitochondrial from Penicillium rubens (strain ATCC 28089 / DSM 1075 / NRRL 1951 / Wisconsin 54-1255) (Penicillium chrysogenum).